We begin with the raw amino-acid sequence, 150 residues long: Large ribosomal subunit protein uL13 (150 aa).

Belongs to the universal ribosomal protein uL13 family. In terms of assembly, part of the 50S ribosomal subunit.

Functionally, this protein is one of the early assembly proteins of the 50S ribosomal subunit, although it is not seen to bind rRNA by itself. It is important during the early stages of 50S assembly. The polypeptide is Large ribosomal subunit protein uL13 (Chlamydia abortus (strain DSM 27085 / S26/3) (Chlamydophila abortus)).